Consider the following 205-residue polypeptide: Variable small protein 11 (205 aa).

The signal sequence occupies residues 1–18 (MRKRISAIIMTLFMVFMS). Cys-19 carries N-palmitoyl cysteine lipidation. Cys-19 is lipidated: S-diacylglycerol cysteine.

Belongs to the variable small protein (Vsp) family.

It is found in the cell outer membrane. Its function is as follows. The Vlp and Vsp proteins are antigenically distinct proteins, only one vlp or vsp gene is transcriptionally active at any one time. Switching between these genes is a mechanism of host immune response evasion. The sequence is that of Variable small protein 11 from Borrelia hermsii.